The following is a 258-amino-acid chain: Serine/arginine-rich splicing factor x16 (258 aa).

Residues 8-81 (RKVYVGDLGN…RRARVELSTG (74 aa)) form the RRM domain. Disordered stretches follow at residues 81–113 (GKYA…GGRG) and 130–258 (CRER…VSRD). Residues 86-103 (SGGGGGGGGGGGGGGGLG) show a composition bias toward gly residues. Positions 104–113 (GRDRGGGGRG) are enriched in basic and acidic residues. A CCHC-type zinc finger spans residues 116–132 (KCYECGGRGHFARHCRE). Basic residues-rich tracts occupy residues 130–141 (CRERKARQRRRS) and 149–166 (STSR…RSRS). Composition is skewed to basic and acidic residues over residues 180–197 (NGRD…HERN) and 210–221 (RRYEDEDDDRVR). 2 stretches are compositionally biased toward low complexity: residues 231–240 (RSASPAVRRG) and 249–258 (SSASRSVSRD).

As to quaternary structure, interacts (via Arg/Ser-rich region) with Alsin2/CG7564, Rbp1 and Doa (via N-terminus). Highly phosphorylated. May be phosphorylated by the serine/threonine-protein kinase Doa.

The protein localises to the nucleus. Serine/arginine-rich splicing factor (SR protein) involved in differential exon usage during RNA transcript processing, probably by binding exonic splicing enhancer elements and recruiting components of the splicing machinery. Binds RNA stem-loop structures with consensus sequence 5'-CCGUNUNKNW-3'. Regulator of genes involved in lipid and carbohydrate metabolism, the immune response and the response to xenobiotics. The protein is Serine/arginine-rich splicing factor x16 of Drosophila melanogaster (Fruit fly).